Here is a 1178-residue protein sequence, read N- to C-terminus: Phytochrome B (1178 aa).

The segment covering 1–15 (MASGSRATPTRSPSS) has biased composition (polar residues). The segment at 1–58 (MASGSRATPTRSPSSARPEAPRHAHHHHHHHSQSSGGSTSRAGGGGGGGGGGGGTAAT) is disordered. The segment covering 23-32 (HAHHHHHHHS) has biased composition (basic residues). Over residues 42-55 (AGGGGGGGGGGGGT) the composition is skewed to gly residues. A GAF domain is found at 267-449 (DIKLLCDTVV…AFGLQLNMEL (183 aa)). Cys372 is a binding site for phytochromobilin. PAS domains follow at residues 668 to 739 (VARE…LRGE) and 802 to 873 (DYKA…MVVI). Positions 950 to 1170 (YICQEIKNPL…LIVLELPQPR (221 aa)) constitute a Histidine kinase domain.

Belongs to the phytochrome family. In terms of assembly, homodimer. In terms of processing, contains one covalently linked phytochromobilin chromophore.

In terms of biological role, regulatory photoreceptor which exists in two forms that are reversibly interconvertible by light: the Pr form that absorbs maximally in the red region of the spectrum and the Pfr form that absorbs maximally in the far-red region. Photoconversion of Pr to Pfr induces an array of morphogenic responses, whereas reconversion of Pfr to Pr cancels the induction of those responses. Pfr controls the expression of a number of nuclear genes including those encoding the small subunit of ribulose-bisphosphate carboxylase, chlorophyll A/B binding protein, protochlorophyllide reductase, rRNA, etc. It also controls the expression of its own gene(s) in a negative feedback fashion. The polypeptide is Phytochrome B (PHYB) (Sorghum bicolor (Sorghum)).